The sequence spans 732 residues: Polyribonucleotide nucleotidyltransferase (732 aa).

Mg(2+) is bound by residues Asp503 and Asp509. The KH domain occupies 570–629 (PRLTSIQIPVDAIGLIIGKGGETIRSITEETGAEINIEDDGTVTIACSSPEGTNAAVETI). Residues 639-713 (GNTYLGKVRD…GKNRFALSIK (75 aa)) form the S1 motif domain. The interval 710–732 (LSIKAVESEPEKSDENKAGTEGN) is disordered. Over residues 715–732 (VESEPEKSDENKAGTEGN) the composition is skewed to basic and acidic residues.

This sequence belongs to the polyribonucleotide nucleotidyltransferase family. Mg(2+) is required as a cofactor.

Its subcellular location is the cytoplasm. It catalyses the reaction RNA(n+1) + phosphate = RNA(n) + a ribonucleoside 5'-diphosphate. In terms of biological role, involved in mRNA degradation. Catalyzes the phosphorolysis of single-stranded polyribonucleotides processively in the 3'- to 5'-direction. The polypeptide is Polyribonucleotide nucleotidyltransferase (Chlorobium phaeobacteroides (strain DSM 266 / SMG 266 / 2430)).